A 155-amino-acid chain; its full sequence is HTH-type transcriptional regulator IscR (155 aa).

Residues 2-136 (KLSTKGRYAM…HQTRLSDIIK (135 aa)) form the HTH rrf2-type domain. A DNA-binding region (H-T-H motif) is located at residues 30-53 (LAEVSKRQDISLPYLEQLFVKLRR). Positions 141-145 (PCPAV) are heme regulatory motif (HRM). Cys142 provides a ligand contact to [2Fe-2S] cluster.

[2Fe-2S] cluster is required as a cofactor.

Its function is as follows. Regulates the transcription of several operons and genes involved in the biogenesis of Fe-S clusters and Fe-S-containing proteins. Functions as a transcriptional repressor of genes involved in iron metabolism by directly binding to the promoter region of genes preceded by the Iron-Rhodo-box motif. Binds to iscR and hemP promoter regions independently of an Fe-S cluster, but their transcriptional repression is Fe-S cluster-dependent. Seems to activate some target genes in a Fe-S cluster-independent manner. Negatively regulates its own transcription in the presence of iron only. This is HTH-type transcriptional regulator IscR from Cereibacter sphaeroides (strain ATCC 17023 / DSM 158 / JCM 6121 / CCUG 31486 / LMG 2827 / NBRC 12203 / NCIMB 8253 / ATH 2.4.1.) (Rhodobacter sphaeroides).